Reading from the N-terminus, the 179-residue chain is Large ribosomal subunit protein uL5 (179 aa).

Belongs to the universal ribosomal protein uL5 family. In terms of assembly, part of the 50S ribosomal subunit; part of the 5S rRNA/L5/L18/L25 subcomplex. Contacts the 5S rRNA and the P site tRNA. Forms a bridge to the 30S subunit in the 70S ribosome.

This is one of the proteins that bind and probably mediate the attachment of the 5S RNA into the large ribosomal subunit, where it forms part of the central protuberance. In the 70S ribosome it contacts protein S13 of the 30S subunit (bridge B1b), connecting the 2 subunits; this bridge is implicated in subunit movement. Contacts the P site tRNA; the 5S rRNA and some of its associated proteins might help stabilize positioning of ribosome-bound tRNAs. This chain is Large ribosomal subunit protein uL5, found in Prochlorococcus marinus (strain MIT 9313).